Reading from the N-terminus, the 843-residue chain is Eisosome protein 1 (843 aa).

The disordered stretch occupies residues M1–P54. Residue S2 is modified to N-acetylserine. A Phosphoserine modification is found at S2. The span at K33 to K46 shows a compositional bias: basic residues. 2 positions are modified to phosphoserine: S88 and S130. The interval K120–R176 is disordered. Composition is skewed to polar residues over residues R127–K137 and T163–R176. Phosphoserine occurs at positions 182, 401, 584, and 710. Residues D717–K843 are disordered. Position 720 is a phosphothreonine (T720). Over residues S752–A764 the composition is skewed to low complexity. Phosphoserine is present on residues S763 and S775. The segment covering S781 to E797 has biased composition (basic and acidic residues). Residues I798 to L810 show a composition bias toward polar residues. Residues S816, S828, S829, and S838 each carry the phosphoserine modification.

The protein belongs to the EIS1 family.

The protein resides in the cytoplasmic granule. The protein localises to the cell membrane. Functionally, required for normal formation of eisosomes, large cytoplasmic protein assemblies that localize to specialized domains on plasma membrane and mark the site of endocytosis. This is Eisosome protein 1 (EIS1) from Saccharomyces cerevisiae (strain JAY291) (Baker's yeast).